We begin with the raw amino-acid sequence, 249 residues long: Probable transcriptional regulatory protein Rru_A1086 (249 aa).

This sequence belongs to the TACO1 family.

The protein localises to the cytoplasm. This Rhodospirillum rubrum (strain ATCC 11170 / ATH 1.1.1 / DSM 467 / LMG 4362 / NCIMB 8255 / S1) protein is Probable transcriptional regulatory protein Rru_A1086.